The primary structure comprises 456 residues: Cysteine--tRNA ligase (456 aa).

Cysteine 28 serves as a coordination point for Zn(2+). A 'HIGH' region motif is present at residues 30–40 (ITVYDHCHLGH). Positions 209, 234, and 238 each coordinate Zn(2+). The 'KMSKS' region signature appears at 266–270 (KMAKS). Lysine 269 lines the ATP pocket.

The protein belongs to the class-I aminoacyl-tRNA synthetase family. Monomer. Requires Zn(2+) as cofactor.

It is found in the cytoplasm. The catalysed reaction is tRNA(Cys) + L-cysteine + ATP = L-cysteinyl-tRNA(Cys) + AMP + diphosphate. The sequence is that of Cysteine--tRNA ligase from Legionella pneumophila (strain Paris).